The chain runs to 1462 residues: Serine/threonine-protein kinase HSL1 (1462 aa).

Disordered stretches follow at residues 1-26 (MSTVVNRRSSHQFDSPSNHLDHSSSM) and 41-69 (RLSQISTNTNNSNKKRKTQNKIGPWKLGR). Residues 65–330 (WKLGRTLGRG…IDAILTHPLL (266 aa)) enclose the Protein kinase domain. Residues 71–79 (LGRGSTGRV) and lysine 94 each bind ATP. Catalysis depends on aspartate 201, which acts as the Proton acceptor. 6 disordered regions span residues 412–450 (SNSFNSSNDVDSARSLPRSTSYVKTTVTDHATGEKHTTV), 471–540 (SAKG…TSVN), 598–637 (ENSKPVSKTPVSQLPPPPPPPIETPTSRTNSVKRGKTWSL), 992–1031 (EDEEFEDEKPFISVPSSEDDEGNTHKNKRGGLRDSGNYDF), 1095–1230 (KETL…QQTK), and 1269–1321 (NRAA…LQKE). Polar residues-rich tracts occupy residues 428 to 440 (PRSTSYVKTTVTD) and 471 to 487 (SAKGNVLSNITNRPNTP). The segment covering 510–526 (ASRSRNASSRSLKSNSS) has biased composition (low complexity). The span at 527–540 (TGRNGNNASVTSVN) shows a compositional bias: polar residues. The span at 610-620 (QLPPPPPPPIE) shows a compositional bias: pro residues. A coiled-coil region spans residues 636–715 (SLARRERELA…KLQKHQSAHD (80 aa)). Residues 1095–1130 (KETLLKNHSSDEATIEVKEDNNEHDFNDKIKQHYDD) are compositionally biased toward basic and acidic residues. A compositionally biased stretch (acidic residues) spans 1131 to 1153 (NGDSEEDDEDEDEEEEDDDDDDD). Polar residues-rich tracts occupy residues 1165 to 1176 (HNYSLAEITSES), 1197 to 1218 (STGIFSTTQFPRSPYVVNNNGD), and 1292 to 1302 (NISQPLSSPTK).

Belongs to the protein kinase superfamily. CAMK Ser/Thr protein kinase family. NIM1 subfamily. Phosphorylated throughout the cell cycle, except for the G1 phase.

The protein localises to the bud neck. The catalysed reaction is L-seryl-[protein] + ATP = O-phospho-L-seryl-[protein] + ADP + H(+). It carries out the reaction L-threonyl-[protein] + ATP = O-phospho-L-threonyl-[protein] + ADP + H(+). Functionally, protein kinase involved in determination of morphology during the cell cycle of both yeast-form and hyphal cells via regulation of SWE1 and CDC28. Regulates pseudohypha formation, but is not required for septin ring organization or septum formation. Plays an essential role in virulence in a mouse model. This Candida albicans (strain SC5314 / ATCC MYA-2876) (Yeast) protein is Serine/threonine-protein kinase HSL1 (HSL1).